Here is a 757-residue protein sequence, read N- to C-terminus: Vitamin K-dependent gamma-carboxylase (757 aa).

Position 2 is an N-acetylalanine (A2). Residues 2–60 (AVHRGSALVAPASDKVQKNKSAQTSGLKQGSRMEKILGFEWTDLSSWQSVVTLLNKPTD) lie on the Cytoplasmic side of the membrane. Residues 61–81 (PANLAVFRFLFAFLMLLDIPQ) form a helical membrane-spanning segment. Over 82-113 (ERGLSSLDRKYLDGLDVCRFPLLDALRPLPLD) the chain is Lumenal. A disulfide bridge links C99 with C450. A helical membrane pass occupies residues 114 to 134 (WMYLVYTIMFLGALGMMLGLC). The Cytoplasmic segment spans residues 135–136 (YR). Residues 137–157 (LSCVLFLLPYWYVFLLDKTSW) form a helical membrane-spanning segment. The Lumenal portion of the chain corresponds to 158-292 (NNHSYLYGLL…VSYFHCMNSQ (135 aa)). Residues 293-313 (LFSIGMFPYVMLASSPLFCSA) traverse the membrane as a helical segment. Topologically, residues 314–361 (EWPRKLVARCPKRLQELLPTKAAPRPSASCVYKRSRGKAGPKPGLRHQ) are cytoplasmic. Residues 362 to 382 (LGAIFTLLYLLEQLFLPYSHF) traverse the membrane as a helical segment. Residues 383–757 (LTQGYNNWTN…PDSEHVHSEF (375 aa)) are Lumenal-facing. The segment at 729–757 (EPVDESSASNTDSSNHPSEPDSEHVHSEF) is disordered. The segment covering 734–745 (SSASNTDSSNHP) has biased composition (polar residues). Residues 746-757 (SEPDSEHVHSEF) show a composition bias toward basic and acidic residues.

This sequence belongs to the vitamin K-dependent gamma-carboxylase family. Monomer. May interact with CALU.

The protein localises to the endoplasmic reticulum membrane. The catalysed reaction is 4-carboxy-L-glutamyl-[protein] + 2,3-epoxyphylloquinone + H2O + H(+) = phylloquinol + L-glutamyl-[protein] + CO2 + O2. Its function is as follows. Mediates the vitamin K-dependent carboxylation of glutamate residues to calcium-binding gamma-carboxyglutamate (Gla) residues with the concomitant conversion of the reduced hydroquinone form of vitamin K to vitamin K epoxide. Catalyzes gamma-carboxylation of various proteins, such as blood coagulation factors (F2, F7, F9 and F10), osteocalcin (bglap and bglap2) or matrix Gla protein (MGP). This Mus musculus (Mouse) protein is Vitamin K-dependent gamma-carboxylase (Ggcx).